We begin with the raw amino-acid sequence, 536 residues long: ATPase expression protein 3 (536 aa).

PPR repeat units follow at residues 212–246 (TTTM…KKTP) and 386–421 (TTGS…GVTP).

Its subcellular location is the mitochondrion inner membrane. Its function is as follows. Required for respiration. The sequence is that of ATPase expression protein 3 (AEP3) from Eremothecium gossypii (strain ATCC 10895 / CBS 109.51 / FGSC 9923 / NRRL Y-1056) (Yeast).